Reading from the N-terminus, the 467-residue chain is Cytochrome P450 85A3 (467 aa).

Residues 2–22 form a helical membrane-spanning segment; it reads AIFLIIFVVFFGFCILSTPLF. Cys-417 is a binding site for heme.

The protein belongs to the cytochrome P450 family. It depends on heme as a cofactor. As to expression, expressed in fruits.

Its subcellular location is the membrane. The catalysed reaction is 6-deoxocastasterone + reduced [NADPH--hemoprotein reductase] + O2 = 6alpha-hydroxycastasterone + oxidized [NADPH--hemoprotein reductase] + H2O + H(+). It carries out the reaction 6alpha-hydroxycastasterone + reduced [NADPH--hemoprotein reductase] + O2 = castasterone + oxidized [NADPH--hemoprotein reductase] + 2 H2O + H(+). The enzyme catalyses castasterone + reduced [NADPH--hemoprotein reductase] + O2 = brassinolide + oxidized [NADPH--hemoprotein reductase] + H2O + H(+). It catalyses the reaction 6-deoxocastasterone + 2 reduced [NADPH--hemoprotein reductase] + 2 O2 = castasterone + 2 oxidized [NADPH--hemoprotein reductase] + 3 H2O + 2 H(+). It functions in the pathway plant hormone biosynthesis; brassinosteroid biosynthesis. In terms of biological role, catalyzes the C6-oxidation step in brassinosteroids biosynthesis. Converts 6-deoxocastasterone (6-deoxoCS) to castasterone (CS), and castasterone (CS) to brassinolide (BL). The chain is Cytochrome P450 85A3 from Solanum lycopersicum (Tomato).